Reading from the N-terminus, the 251-residue chain is uncharacterized protein (251 aa).

An N-terminal signal peptide occupies residues Met-1–Ala-18.

It belongs to the MlaA family.

This is an uncharacterized protein from Rickettsia conorii (strain ATCC VR-613 / Malish 7).